A 568-amino-acid chain; its full sequence is bZIP transcription factor 60 (568 aa).

2 stretches are compositionally biased toward low complexity: residues 1-13 (MAEPDLLAPFADL) and 60-78 (TTSSSSSAAGSPEAGTSSA). Disordered stretches follow at residues 1–29 (MAEPDLLAPFADLPFPPGDDFPDFPTLGD) and 45–134 (DFDV…RKKQ). Over 1–240 (MAEPDLLAPF…PAKKARKTKK (240 aa)) the chain is Cytoplasmic. Positions 103 to 113 (GGKDGKDDEAK) are enriched in basic and acidic residues. In terms of domain architecture, bZIP spans 111–171 (EAKRRARLVR…AENAALKQQL (61 aa)). The segment at 113-144 (KRRARLVRNRESAHQSRQRKKQYVEELEGKVK) is basic motif. A leucine-zipper region spans residues 150–157 (IADLTARI). The chain crosses the membrane as a helical span at residues 241–261 (VAGVSLLGLLFLMMVCGCLVP). Residues 262–568 (AVNRMYGAAY…LPFKSHSPHL (307 aa)) are Lumenal-facing. N-linked (GlcNAc...) asparagine glycans are attached at residues N307, N452, N456, N488, and N499. The segment at 479–510 (AIPLRGSTSNDTDHFKAPPKNHSQSHAGRKPV) is disordered.

It belongs to the bZIP family.

Its subcellular location is the endoplasmic reticulum membrane. It is found in the nucleus. In terms of biological role, transcription factor involved in endoplasmic reticulum (ER) stress response. Acts as a ER stress sensor and activates the transcription factor BZIP50 and the chaperone BIP1. The protein is bZIP transcription factor 60 of Oryza sativa subsp. japonica (Rice).